Here is a 240-residue protein sequence, read N- to C-terminus: Ribonuclease PH (240 aa).

Phosphate is bound by residues arginine 87 and 125-127; that span reads GTR.

The protein belongs to the RNase PH family. In terms of assembly, homohexameric ring arranged as a trimer of dimers.

It carries out the reaction tRNA(n+1) + phosphate = tRNA(n) + a ribonucleoside 5'-diphosphate. Functionally, phosphorolytic 3'-5' exoribonuclease that plays an important role in tRNA 3'-end maturation. Removes nucleotide residues following the 3'-CCA terminus of tRNAs; can also add nucleotides to the ends of RNA molecules by using nucleoside diphosphates as substrates, but this may not be physiologically important. Probably plays a role in initiation of 16S rRNA degradation (leading to ribosome degradation) during starvation. The polypeptide is Ribonuclease PH (Pseudomonas putida (strain GB-1)).